A 363-amino-acid chain; its full sequence is 3-isopropylmalate dehydrogenase (363 aa).

Xaa78–Xaa91 is an NAD(+) binding site. Substrate contacts are provided by Arg99, Arg109, Arg138, and Asp227. 3 residues coordinate Mg(2+): Asp227, Asp251, and Asp255. Gly285–Asn297 serves as a coordination point for NAD(+).

It belongs to the isocitrate and isopropylmalate dehydrogenases family. LeuB type 1 subfamily. In terms of assembly, homodimer. Mg(2+) serves as cofactor. It depends on Mn(2+) as a cofactor.

It is found in the cytoplasm. The enzyme catalyses (2R,3S)-3-isopropylmalate + NAD(+) = 4-methyl-2-oxopentanoate + CO2 + NADH. It participates in amino-acid biosynthesis; L-leucine biosynthesis; L-leucine from 3-methyl-2-oxobutanoate: step 3/4. Its function is as follows. Catalyzes the oxidation of 3-carboxy-2-hydroxy-4-methylpentanoate (3-isopropylmalate) to 3-carboxy-4-methyl-2-oxopentanoate. The product decarboxylates to 4-methyl-2 oxopentanoate. The protein is 3-isopropylmalate dehydrogenase of Buchnera aphidicola subsp. Uroleucon solidaginis.